Consider the following 99-residue polypeptide: MSFVITNPEALTVAATEVRRIRDRAIQSDAQVAPMTTAVRPPAADLVSEKAATFLVEYARKYRQTIAAAAVVLEEFAHALTTGADKYATAEADNIKTFS.

Residues 1–92 enclose the PE domain; that stretch reads MSFVITNPEA…GADKYATAEA (92 aa). Serine 2 is subject to N-acetylserine.

This sequence belongs to the mycobacterial PE family. Forms a heterodimer with PPE41. The dimer forms a 1:1:1 heterotrimeric complex with EspG5. Interacts with PPE51.

It is found in the secreted. The PE25/PPE41 dimer induces both a strong humoral and cellular immune response. PE25 protein alone induces low response. The dimer induces necrosis, but not apoptosis, in mouse macrophage cells. It also induces activation and maturation of mouse dendritic cells and drives Th2-biased immune responses. This chain is PE-PGRS family protein PE25, found in Mycobacterium tuberculosis (strain ATCC 25618 / H37Rv).